Consider the following 320-residue polypeptide: MGLPWGQPHLGLQMLLLALNCLRPSLSLGEWGSWMDASSQTQGAGGPAGVIGPWAPAPLRLGEAAPGTPTPVSVAHLLSPVATELVPYTPQITAWDLEGKVTATTFSLEQPRCVFDGLASASDTVWLVVAFSNASRGFQNPETLADIPASPQLLTDGHYMTLPLSPDQLPCGDPMAGSGGAPVLRVGHDHGCHQQPFCNAPLPGPGPYREDPRIHRHLARAAKWQHDRHYLHPLFSGRPPTLGLLGSLYHALLQPVVAGGGPGAAADRLLHGQALHDPPHPTQRGRHTAGGLQAWPGPPPQPQPLAWPLCMGLGEMGRWE.

A signal peptide spans 1–29 (MGLPWGQPHLGLQMLLLALNCLRPSLSLG). At 30 to 240 (EWGSWMDASS…LHPLFSGRPP (211 aa)) the chain is on the lumenal side. An N-linked (GlcNAc...) asparagine glycan is attached at Asn133. A helical transmembrane segment spans residues 241 to 266 (TLGLLGSLYHALLQPVVAGGGPGAAA). The Cytoplasmic portion of the chain corresponds to 267-320 (DRLLHGQALHDPPHPTQRGRHTAGGLQAWPGPPPQPQPLAWPLCMGLGEMGRWE). The segment at 273-303 (QALHDPPHPTQRGRHTAGGLQAWPGPPPQPQ) is disordered.

The protein belongs to the uroplakin-3 family. Heterodimer with uroplakin-1B (UPK1B).

Its subcellular location is the cell membrane. In terms of biological role, component of the asymmetric unit membrane (AUM); a highly specialized biomembrane elaborated by terminally differentiated urothelial cells. May play an important role in AUM-cytoskeleton interaction in terminally differentiated urothelial cells. It also contributes to the formation of urothelial glycocalyx which may play an important role in preventing bacterial adherence. The polypeptide is Uroplakin-3b (UPK3B) (Homo sapiens (Human)).